Here is a 594-residue protein sequence, read N- to C-terminus: Solute carrier family 22 member 14 (594 aa).

Over 1 to 70 (MAGEENFKEE…EFGTFQQRLV (70 aa)) the chain is Cytoplasmic. Residues 71–91 (ALTFIPSIMSAFFMFADHFVF) form a helical membrane-spanning segment. The Extracellular portion of the chain corresponds to 92-184 (TAQKPYCNTS…LVCGMETKKD (93 aa)). Residues asparagine 99, asparagine 117, asparagine 125, and asparagine 150 are each glycosylated (N-linked (GlcNAc...) asparagine). The helical transmembrane segment at 185–205 (TAQIMFMAGLPIGSLIFRLIT) threads the bilayer. The Cytoplasmic segment spans residues 206-210 (DKMGR). A helical transmembrane segment spans residues 211 to 231 (YPAILLSLLGLIIFGFGTAFM). The Extracellular segment spans residues 232–235 (NSFH). A helical membrane pass occupies residues 236–256 (LYLFFRFGISQSVVGYAISSI). The Cytoplasmic portion of the chain corresponds to 257–270 (SLATEWLVGEHRAH). Residues 271 to 291 (AIILGHCFFAVGAVLLTGIAY) traverse the membrane as a helical segment. Residues 292-297 (SLPHWQ) are Extracellular-facing. A helical transmembrane segment spans residues 298-318 (LLFLVGGILVIPFISYIWILP). At 319-379 (ESPRWLMMKG…DFCKNRQLCK (61 aa)) the chain is on the cytoplasmic side. A helical transmembrane segment spans residues 380 to 400 (VTLVMSCVWFTVSYTYFTLSL). Residues 401–408 (RMRELGVS) are Extracellular-facing. Residues 409–431 (VHFRHVVPSIMEVPARLCCIFLL) form a helical membrane-spanning segment. Topologically, residues 432-437 (QQIGRK) are cytoplasmic. Residues 438–458 (WSLAVTLLQAIIWCLLLLFLP) traverse the membrane as a helical segment. Over 459–488 (EGEDGLRLKWPRCPATELKSMTILVLMLRE) the chain is Extracellular. The helical transmembrane segment at 489–509 (FSLAATVTVFFLYTAELLPTV) threads the bilayer. At 510–512 (LRA) the chain is on the cytoplasmic side. The helical transmembrane segment at 513–533 (TGLGLVSLASVAGAILSLTII) threads the bilayer. The Extracellular segment spans residues 534-538 (SQTPS). Residues 539 to 559 (LLPIFLCCVLAIVAFSLSSLL) traverse the membrane as a helical segment. The Cytoplasmic portion of the chain corresponds to 560–594 (PETRDQPLSESLNHSSQIRNKVKDMKTKETSSDDV). Residues 566–594 (PLSESLNHSSQIRNKVKDMKTKETSSDDV) form a disordered region. A compositionally biased stretch (polar residues) spans 567–578 (LSESLNHSSQIR). The segment covering 580–594 (KVKDMKTKETSSDDV) has biased composition (basic and acidic residues).

The protein belongs to the major facilitator (TC 2.A.1) superfamily. Organic cation transporter (TC 2.A.1.19) family. In terms of tissue distribution, ubiquitous.

It is found in the mitochondrion inner membrane. It localises to the cell projection. The protein resides in the cilium. The protein localises to the flagellum membrane. The enzyme catalyses riboflavin(in) = riboflavin(out). Functionally, riboflavin transporter localized at the inner mitochondrial membrane of the spermatozoa midpiece, which is required for male fertility. SLC22A14-mediated riboflavin transport is essential for spermatozoa energy generation and motility: riboflavin is the precursor of FMN and FAD, which are coenzymes of many enzymes in the TCA cycle (the citric acid cycle) in mitochondria. Required for sperm motility and normal sperm flagellar structure. This Homo sapiens (Human) protein is Solute carrier family 22 member 14.